The sequence spans 410 residues: Transcription factor Dp-1 (410 aa).

K3 bears the N6-acetyllysine mark. S23 is subject to Phosphoserine; by CDK2. Residues 77-114 (VVGSPHTPNTHFVSQNQPSDPSPWSAGKRNRKGEKNGK) form a disordered region. Residues 82 to 95 (HTPNTHFVSQNQPS) are compositionally biased toward polar residues. Over residues 104-114 (KRNRKGEKNGK) the composition is skewed to basic residues. The segment at 105–127 (RNRKGEKNGKGLRHFSMKVCEKV) is interaction with CEBPA. A DNA-binding region spans residues 113 to 195 (GKGLRHFSMK…KKEIKWIGLP (83 aa)). Residues 161-195 (DQKNIRRRVYDALNVLMAMNIISKEKKEIKWIGLP) carry the DEF box motif. Residues 204–277 (SLEVERQRRL…KKTVIDCSIS (74 aa)) form a dimerization region. The interval 211-327 (RRLERIKQKQ…DLRVARSLVP (117 aa)) is enhances binding of RB protein to E2F. Positions 214–246 (ERIKQKQSQLQELILQQIAFKNLVQRNRQVEQQ) are DCB1. A DCB2 region spans residues 259–315 (LPFIIVNTSKKTVIDCSISNDKFEYLFNFDNTFEIHDDIEVLKRMGMACGLESGSCS). Residues 370-410 (GALATSSSGSQYSGSRVETPVSCVGEDDEDDEDFNENEEED) form a disordered region. Over residues 375–384 (SSSGSQYSGS) the composition is skewed to low complexity. Over residues 394–410 (GEDDEDDEDFNENEEED) the composition is skewed to acidic residues.

This sequence belongs to the E2F/DP family. As to quaternary structure, component of the E2F:DP transcription factor complex. Forms heterodimers with E2F family members. The complex can interact with hypophosphorylated retinoblastoma protein RB1 and related proteins (RBL1 and RBL2) that inhibit the E2F transactivation domain. This repression involves recruitment of histone deacetylase (HDAC). During the cell cycle, from mid-to-late G1 phase, RB family members become phosphorylated, detach from the DRTF1/E2F complex to render E2F transcriptionally active. Part of the E2F6.com-1 complex in G0 phase is composed of E2F6, MGA, MAX, TFDP1, CBX3, BAT8, EUHMTASE1, RING1, RNF2, MBLR, L3MBTL2 YAF2. Component of the DREAM complex (also named LINC complex) at least composed of E2F4, E2F5, LIN9, LIN37, LIN52, LIN54, MYBL1, MYBL2, RBL1, RBL2, RBBP4, TFDP1 and TFDP2. The complex exists in quiescent cells where it represses cell cycle-dependent genes. It dissociates in S phase when LIN9, LIN37, LIN52 and LIN54 form a subcomplex that binds to MYBL2. The complex TFDP1:E2F1 interacts with CEBPA; the interaction prevents CEBPA binding to target gene promoters and represses its transcriptional activity. Post-translationally, ubiquitinated by the BCR(KBTBD5) complex, leading to its subsequent degradation. In terms of processing, phosphorylation by E2F1-bound cyclin A-CDK2, in the S phase, inhibits E2F-mediated DNA binding and transactivation.

It is found in the nucleus. The protein resides in the cytoplasm. Functionally, can stimulate E2F-dependent transcription. Binds DNA cooperatively with E2F family members through the E2 recognition site, 5'-TTTC[CG]CGC-3', found in the promoter region of a number of genes whose products are involved in cell cycle regulation or in DNA replication. The E2F1:DP complex appears to mediate both cell proliferation and apoptosis. Blocks adipocyte differentiation by repressing CEBPA binding to its target gene promoters. The sequence is that of Transcription factor Dp-1 (TFDP1) from Bos taurus (Bovine).